The following is a 39-amino-acid chain: Photosystem II reaction center protein J (39 aa).

Residues 7–27 form a helical membrane-spanning segment; it reads IPLWVVAVIAGLGVIAVVGLF.

This sequence belongs to the PsbJ family. As to quaternary structure, PSII is composed of 1 copy each of membrane proteins PsbA, PsbB, PsbC, PsbD, PsbE, PsbF, PsbH, PsbI, PsbJ, PsbK, PsbL, PsbM, PsbT, PsbX, PsbY, PsbZ, Psb30/Ycf12, peripheral proteins PsbO, CyanoQ (PsbQ), PsbU, PsbV and a large number of cofactors. It forms dimeric complexes.

It localises to the cellular thylakoid membrane. In terms of biological role, one of the components of the core complex of photosystem II (PSII). PSII is a light-driven water:plastoquinone oxidoreductase that uses light energy to abstract electrons from H(2)O, generating O(2) and a proton gradient subsequently used for ATP formation. It consists of a core antenna complex that captures photons, and an electron transfer chain that converts photonic excitation into a charge separation. In Gloeothece citriformis (strain PCC 7424) (Cyanothece sp. (strain PCC 7424)), this protein is Photosystem II reaction center protein J.